We begin with the raw amino-acid sequence, 81 residues long: Adipogenin (81 aa).

The chain crosses the membrane as a helical span at residues 16-36 (FLASWLCLPVGLLLFLLIVWL).

It belongs to the adipogenin family.

Its subcellular location is the membrane. The protein resides in the nucleus. Its function is as follows. Plays a role in stimulating adipocyte differentiation and development. The chain is Adipogenin from Sus scrofa (Pig).